The following is a 55-amino-acid chain: Large ribosomal subunit protein bL33 (55 aa).

This sequence belongs to the bacterial ribosomal protein bL33 family.

This Dehalococcoides mccartyi (strain ATCC BAA-2266 / KCTC 15142 / 195) (Dehalococcoides ethenogenes (strain 195)) protein is Large ribosomal subunit protein bL33.